We begin with the raw amino-acid sequence, 446 residues long: Na(+)-translocating NADH-quinone reductase subunit A (446 aa).

It belongs to the NqrA family. As to quaternary structure, composed of six subunits; NqrA, NqrB, NqrC, NqrD, NqrE and NqrF.

It carries out the reaction a ubiquinone + n Na(+)(in) + NADH + H(+) = a ubiquinol + n Na(+)(out) + NAD(+). Functionally, NQR complex catalyzes the reduction of ubiquinone-1 to ubiquinol by two successive reactions, coupled with the transport of Na(+) ions from the cytoplasm to the periplasm. NqrA to NqrE are probably involved in the second step, the conversion of ubisemiquinone to ubiquinol. This Histophilus somni (strain 2336) (Haemophilus somnus) protein is Na(+)-translocating NADH-quinone reductase subunit A.